The chain runs to 441 residues: Proline--tRNA ligase (441 aa).

Belongs to the class-II aminoacyl-tRNA synthetase family. ProS type 2 subfamily. Homodimer.

The protein localises to the cytoplasm. It carries out the reaction tRNA(Pro) + L-proline + ATP = L-prolyl-tRNA(Pro) + AMP + diphosphate. Functionally, catalyzes the attachment of proline to tRNA(Pro) in a two-step reaction: proline is first activated by ATP to form Pro-AMP and then transferred to the acceptor end of tRNA(Pro). This Methylorubrum extorquens (strain PA1) (Methylobacterium extorquens) protein is Proline--tRNA ligase.